The following is a 320-amino-acid chain: Fructose-1,6-bisphosphatase class 1 (320 aa).

E84, D103, L105, and D106 together coordinate Mg(2+). Substrate-binding positions include 106 to 109, N196, and K262; that span reads DGSS. E268 contacts Mg(2+).

The protein belongs to the FBPase class 1 family. As to quaternary structure, homotetramer. It depends on Mg(2+) as a cofactor.

The protein resides in the cytoplasm. The catalysed reaction is beta-D-fructose 1,6-bisphosphate + H2O = beta-D-fructose 6-phosphate + phosphate. The protein operates within carbohydrate biosynthesis; gluconeogenesis. This is Fructose-1,6-bisphosphatase class 1 from Shewanella amazonensis (strain ATCC BAA-1098 / SB2B).